A 189-amino-acid chain; its full sequence is NADH-quinone oxidoreductase subunit B (189 aa).

[4Fe-4S] cluster-binding residues include C39, C40, C104, and C135.

Belongs to the complex I 20 kDa subunit family. In terms of assembly, NDH-1 is composed of 14 different subunits. Subunits NuoB, C, D, E, F, and G constitute the peripheral sector of the complex. The cofactor is [4Fe-4S] cluster.

It localises to the cell inner membrane. The catalysed reaction is a quinone + NADH + 5 H(+)(in) = a quinol + NAD(+) + 4 H(+)(out). Functionally, NDH-1 shuttles electrons from NADH, via FMN and iron-sulfur (Fe-S) centers, to quinones in the respiratory chain. The immediate electron acceptor for the enzyme in this species is believed to be a menaquinone. Couples the redox reaction to proton translocation (for every two electrons transferred, four hydrogen ions are translocated across the cytoplasmic membrane), and thus conserves the redox energy in a proton gradient. The protein is NADH-quinone oxidoreductase subunit B of Chlorobium phaeovibrioides (strain DSM 265 / 1930) (Prosthecochloris vibrioformis (strain DSM 265)).